An 829-amino-acid polypeptide reads, in one-letter code: Periplasmic nitrate reductase (829 aa).

The segment at residues 1–29 (MKMTRRAFVKANAAASAAAVAGVTLPASA) is a signal peptide (tat-type signal). A 4Fe-4S Mo/W bis-MGD-type domain is found at 41–97 (IKWDKAPCRFCGTGCSVLVGTQNGRVVATQGDPEAPVNKGLNCIKGYFLSKIMYGKD). Cysteine 48, cysteine 51, cysteine 55, and cysteine 83 together coordinate [4Fe-4S] cluster. Mo-bis(molybdopterin guanine dinucleotide) is bound by residues lysine 85, glutamine 152, asparagine 177, cysteine 181, 214–221 (WGSNMAEM), 245–249 (STYYH), 264–266 (QSD), methionine 374, glutamine 378, asparagine 484, 510–511 (SD), lysine 533, aspartate 560, and 718–727 (TGRVLEHWHT). Phenylalanine 794 contacts substrate. Mo-bis(molybdopterin guanine dinucleotide)-binding residues include asparagine 802 and lysine 819.

This sequence belongs to the prokaryotic molybdopterin-containing oxidoreductase family. NasA/NapA/NarB subfamily. Component of the periplasmic nitrate reductase NapAB complex composed of NapA and NapB. It depends on [4Fe-4S] cluster as a cofactor. The cofactor is Mo-bis(molybdopterin guanine dinucleotide). Post-translationally, predicted to be exported by the Tat system. The position of the signal peptide cleavage has not been experimentally proven.

The protein localises to the periplasm. It catalyses the reaction 2 Fe(II)-[cytochrome] + nitrate + 2 H(+) = 2 Fe(III)-[cytochrome] + nitrite + H2O. Its function is as follows. Catalytic subunit of the periplasmic nitrate reductase complex NapAB. Receives electrons from NapB and catalyzes the reduction of nitrate to nitrite. This Aliivibrio fischeri (strain MJ11) (Vibrio fischeri) protein is Periplasmic nitrate reductase.